The primary structure comprises 56 residues: Large ribosomal subunit protein bL32 (56 aa).

A compositionally biased stretch (basic residues) spans 1 to 19; sequence MAVPKRKKSRSTTRHRRAQ. The interval 1–22 is disordered; the sequence is MAVPKRKKSRSTTRHRRAQWKT.

The protein belongs to the bacterial ribosomal protein bL32 family.

This Cutibacterium acnes (strain DSM 16379 / KPA171202) (Propionibacterium acnes) protein is Large ribosomal subunit protein bL32.